We begin with the raw amino-acid sequence, 442 residues long: NALCN channel auxiliary factor 2 (442 aa).

The chain crosses the membrane as a helical span at residues 42 to 62; the sequence is LASLLFFTVLLSNHLWLVSAG. 5 N-linked (GlcNAc...) asparagine glycosylation sites follow: Asn-77, Asn-100, Asn-171, Asn-279, and Asn-354. A helical transmembrane segment spans residues 406–426; the sequence is CVLVLMLLHTMASFSVVQNGV.

It belongs to the NALF family.

It is found in the membrane. In terms of biological role, probable component of the NALCN channel complex, a channel that regulates the resting membrane potential and controls neuronal excitability. This Xenopus tropicalis (Western clawed frog) protein is NALCN channel auxiliary factor 2 (nalf2).